A 1450-amino-acid chain; its full sequence is Protein clueless (1450 aa).

2 disordered regions span residues 1–126 and 266–287; these read MALE…PGSE and KTRP…VSEP. The segment covering 29 to 60 has biased composition (low complexity); the sequence is NNSSAGKKQQQQQQPNQNQNLVNGNGNAADGP. Over residues 62-71 the composition is skewed to basic residues; it reads AKKKGKKNRN. Serine 271 is modified (phosphoserine). The Clu domain occupies 425–667; the sequence is RAEDAFSSKL…RTFPPDVNFL (243 aa). Composition is skewed to basic and acidic residues over residues 725 to 734 and 743 to 765; these read KQSEKTEEKA and KESS…EEKQ. Disordered stretches follow at residues 725–775 and 959–1011; these read KQSE…TKTA and PAVS…SDWT. The segment covering 968 to 983 has biased composition (basic residues); the sequence is KKRSNGNKHNKHKSKG. Positions 984–1008 are enriched in low complexity; that stretch reads NKQQASGNQNGSSAGSSSGGSSSSS. 3 TPR repeats span residues 1102–1135, 1228–1261, and 1263–1296; these read AYNF…LNNV, ALID…NIKY, and GSKA…EKET. A disordered region spans residues 1410–1450; that stretch reads NNNGDTEAETKDATKDNKDLAGASTQLTNGDKDAETAVASS. Residues 1417–1428 are compositionally biased toward basic and acidic residues; it reads AETKDATKDNKD.

The protein belongs to the CLU family.

It localises to the cytoplasm. MRNA-binding protein involved in proper cytoplasmic distribution of mitochondria. The chain is Protein clueless from Drosophila ananassae (Fruit fly).